A 977-amino-acid chain; its full sequence is Disks large-associated protein 3 (977 aa).

The segment covering 1–10 has biased composition (basic and acidic residues); it reads MRGYHGDRGS. 6 disordered regions span residues 1–24, 52–96, 137–167, 181–289, 398–417, and 529–582; these read MRGYHGDRGSHPRPARFADQQHMD, AGLG…MYPG, FHTLPYQRGPAGPGPGPGSGAAPEARSESPS, AKSH…CLDA, AMGDEESGDSDGSPKTSPKA, and PGSS…SADG. A compositionally biased stretch (low complexity) spans 53–73; it reads GLGHLSPEGPLSLSEGPSSVG. Ser-58 carries the post-translational modification Phosphoserine. Residues 74–87 are compositionally biased toward gly residues; the sequence is PEGGPGGVGAGGGS. The segment covering 189–201 has biased composition (basic and acidic residues); it reads PGKRDYNGPKADG. Residues 221-245 show a composition bias toward basic residues; sequence SHHHHHHHHHHHHQSRHGKRSKSKD. The span at 258–271 shows a compositional bias: low complexity; sequence GWWSSDDNLDSDSG. Phosphoserine is present on residues Ser-404, Ser-407, Ser-410, and Ser-414. Residues 538–547 show a composition bias toward pro residues; the sequence is APPPIPPGSQ. A phosphoserine mark is found at Ser-641 and Ser-643. Disordered regions lie at residues 739-788 and 906-939; these read EGYP…RTSP and EEKKVPPPIPKKPSRGRGVPVKERSLDSVDRQRQ. Composition is skewed to basic and acidic residues over residues 767–777 and 925–939; these read GRRDSWMERGS and PVKERSLDSVDRQRQ. Phosphoserine is present on residues Ser-930, Ser-933, and Ser-965.

The protein belongs to the SAPAP family. Interacts with DLG4/PSD-95. In terms of tissue distribution, highly expressed in central and peripherical nervous system (at protein level).

It is found in the cell membrane. Its subcellular location is the postsynaptic density. The protein resides in the synapse. In terms of biological role, may play a role in the molecular organization of synapses and neuronal cell signaling. Could be an adapter protein linking ion channel to the subsynaptic cytoskeleton. May induce enrichment of PSD-95/SAP90 at the plasma membrane. The sequence is that of Disks large-associated protein 3 (Dlgap3) from Mus musculus (Mouse).